Consider the following 88-residue polypeptide: Small ribosomal subunit protein bS20 (88 aa).

The disordered stretch occupies residues 1–27 (MANSKSAKKRALQSEKRRQHNASRRSM).

It belongs to the bacterial ribosomal protein bS20 family.

Binds directly to 16S ribosomal RNA. The chain is Small ribosomal subunit protein bS20 from Shewanella baltica (strain OS223).